Here is a 458-residue protein sequence, read N- to C-terminus: GTPase Der (458 aa).

EngA-type G domains follow at residues 4-169 (PSIA…PKDF) and 178-353 (VMMS…TQHR). GTP-binding positions include 10-17 (GRPNVGKS), 57-61 (DTGGL), 120-123 (NKCE), 184-191 (GRPNVGKS), 231-235 (DTAGI), and 296-299 (NKWD). In terms of domain architecture, KH-like spans 354 to 439 (MRVTTSVVNE…PIILLWRGKQ (86 aa)).

Belongs to the TRAFAC class TrmE-Era-EngA-EngB-Septin-like GTPase superfamily. EngA (Der) GTPase family. As to quaternary structure, associates with the 50S ribosomal subunit.

Functionally, GTPase that plays an essential role in the late steps of ribosome biogenesis. This chain is GTPase Der, found in Prochlorococcus marinus (strain MIT 9515).